The primary structure comprises 300 residues: 4-hydroxy-tetrahydrodipicolinate synthase (300 aa).

Position 46 (Thr-46) interacts with pyruvate. The active-site Proton donor/acceptor is the Tyr-134. Catalysis depends on Lys-162, which acts as the Schiff-base intermediate with substrate. A pyruvate-binding site is contributed by Ile-207.

The protein belongs to the DapA family. Homotetramer; dimer of dimers.

It is found in the cytoplasm. The enzyme catalyses L-aspartate 4-semialdehyde + pyruvate = (2S,4S)-4-hydroxy-2,3,4,5-tetrahydrodipicolinate + H2O + H(+). The protein operates within amino-acid biosynthesis; L-lysine biosynthesis via DAP pathway; (S)-tetrahydrodipicolinate from L-aspartate: step 3/4. Its function is as follows. Catalyzes the condensation of (S)-aspartate-beta-semialdehyde [(S)-ASA] and pyruvate to 4-hydroxy-tetrahydrodipicolinate (HTPA). The protein is 4-hydroxy-tetrahydrodipicolinate synthase of Protochlamydia amoebophila (strain UWE25).